A 269-amino-acid polypeptide reads, in one-letter code: Exodeoxyribonuclease WalJ (269 aa).

His-61, His-63, Asp-65, His-66, and Asp-150 together coordinate a divalent metal cation.

Belongs to the metallo-beta-lactamase superfamily. Fe(2+) is required as a cofactor. Zn(2+) serves as cofactor. Requires Mn(2+) as cofactor.

The protein resides in the cell membrane. Functionally, 5'-&gt;3' double-stranded DNA exonuclease. May be involved in the WalK/WalR signal transduction pathway. Required for accurate coordination of cell division with DNA replication. May play a role in cell wall metabolism. This chain is Exodeoxyribonuclease WalJ, found in Streptococcus pneumoniae serotype 2 (strain D39 / NCTC 7466).